Consider the following 146-residue polypeptide: Putative pre-16S rRNA nuclease (146 aa).

Belongs to the YqgF nuclease family.

It localises to the cytoplasm. Could be a nuclease involved in processing of the 5'-end of pre-16S rRNA. The polypeptide is Putative pre-16S rRNA nuclease (Mycoplasmopsis pulmonis (strain UAB CTIP) (Mycoplasma pulmonis)).